Reading from the N-terminus, the 308-residue chain is General transcription factor IIH subunit 3 (308 aa).

The C4-type zinc-finger motif lies at 268-285 (CSVCLSIFCNFSPICTTC).

This sequence belongs to the TFB4 family. Part of a TFIID-containing RNA polymerase II pre-initiation complex that is composed of TBP and at least GTF2A1, GTF2A2, GTF2E1, GTF2E2, GTF2F1, GTF2H2, GTF2H3, GTF2H4, GTF2H5, GTF2B, TCEA1, ERCC2, ERCC3, TAF1, TAF2, TAF3, TAF4, TAF5, TAF6, TAF7, TAF8, TAF9, TAF10, TAF11, TAF12 and TAF13. Component of the 7-subunit TFIIH core complex composed of XPB/ERCC3, XPD/ERCC2, GTF2H1, GTF2H2, GTF2H3, GTF2H4 and GTF2H5, which is active in NER. The core complex associates with the 3-subunit CDK-activating kinase (CAK) module composed of CCNH/cyclin H, CDK7 and MNAT1 to form the 10-subunit holoenzyme (holo-TFIIH) active in transcription. Interacts with RARA; the interaction requires prior phosphorylation of RARA on 'Ser-369' which then enhances interaction of RARA with CDK7.

The protein localises to the nucleus. Component of the general transcription and DNA repair factor IIH (TFIIH) core complex, which is involved in general and transcription-coupled nucleotide excision repair (NER) of damaged DNA and, when complexed to CAK, in RNA transcription by RNA polymerase II. In NER, TFIIH acts by opening DNA around the lesion to allow the excision of the damaged oligonucleotide and its replacement by a new DNA fragment. In transcription, TFIIH has an essential role in transcription initiation. When the pre-initiation complex (PIC) has been established, TFIIH is required for promoter opening and promoter escape. Phosphorylation of the C-terminal tail (CTD) of the largest subunit of RNA polymerase II by the kinase module CAK controls the initiation of transcription. The sequence is that of General transcription factor IIH subunit 3 (GTF2H3) from Homo sapiens (Human).